The primary structure comprises 301 residues: Acetylglutamate kinase (301 aa).

Substrate-binding positions include 71-72, Arg93, and Asn198; that span reads GG.

The protein belongs to the acetylglutamate kinase family. ArgB subfamily.

The protein resides in the cytoplasm. The catalysed reaction is N-acetyl-L-glutamate + ATP = N-acetyl-L-glutamyl 5-phosphate + ADP. It functions in the pathway amino-acid biosynthesis; L-arginine biosynthesis; N(2)-acetyl-L-ornithine from L-glutamate: step 2/4. Functionally, catalyzes the ATP-dependent phosphorylation of N-acetyl-L-glutamate. The protein is Acetylglutamate kinase of Zymomonas mobilis subsp. mobilis (strain ATCC 31821 / ZM4 / CP4).